Here is a 169-residue protein sequence, read N- to C-terminus: Endoribonuclease YbeY (169 aa).

Residues His126, His130, and His136 each coordinate Zn(2+).

It belongs to the endoribonuclease YbeY family. Requires Zn(2+) as cofactor.

It is found in the cytoplasm. Single strand-specific metallo-endoribonuclease involved in late-stage 70S ribosome quality control and in maturation of the 3' terminus of the 16S rRNA. This chain is Endoribonuclease YbeY, found in Bradyrhizobium sp. (strain BTAi1 / ATCC BAA-1182).